Here is a 370-residue protein sequence, read N- to C-terminus: UDP-N-acetylglucosamine--N-acetylmuramyl-(pentapeptide) pyrophosphoryl-undecaprenol N-acetylglucosamine transferase (370 aa).

UDP-N-acetyl-alpha-D-glucosamine is bound by residues 10-12 (TGG), Asn126, Ser200, Ile255, and Gln300.

Belongs to the glycosyltransferase 28 family. MurG subfamily.

The protein localises to the cell membrane. The catalysed reaction is Mur2Ac(oyl-L-Ala-gamma-D-Glu-L-Lys-D-Ala-D-Ala)-di-trans,octa-cis-undecaprenyl diphosphate + UDP-N-acetyl-alpha-D-glucosamine = beta-D-GlcNAc-(1-&gt;4)-Mur2Ac(oyl-L-Ala-gamma-D-Glu-L-Lys-D-Ala-D-Ala)-di-trans,octa-cis-undecaprenyl diphosphate + UDP + H(+). Its pathway is cell wall biogenesis; peptidoglycan biosynthesis. Its function is as follows. Cell wall formation. Catalyzes the transfer of a GlcNAc subunit on undecaprenyl-pyrophosphoryl-MurNAc-pentapeptide (lipid intermediate I) to form undecaprenyl-pyrophosphoryl-MurNAc-(pentapeptide)GlcNAc (lipid intermediate II). The chain is UDP-N-acetylglucosamine--N-acetylmuramyl-(pentapeptide) pyrophosphoryl-undecaprenol N-acetylglucosamine transferase from Lactobacillus gasseri (strain ATCC 33323 / DSM 20243 / BCRC 14619 / CIP 102991 / JCM 1131 / KCTC 3163 / NCIMB 11718 / NCTC 13722 / AM63).